The following is a 277-amino-acid chain: 2,5-diketo-D-gluconic acid reductase B (277 aa).

Tyr51 functions as the Proton donor in the catalytic mechanism. Residue His109 participates in substrate binding. 189 to 242 serves as a coordination point for NADP(+); it reads SPLARRSELLTEQLLQELAVVYGVTPTQVVLRWHVQLGSTPIPKSADPDRQREN.

The protein belongs to the aldo/keto reductase family.

Its subcellular location is the cytoplasm. It catalyses the reaction 2-dehydro-D-gluconate + NADP(+) = 2,5-didehydro-D-gluconate + NADPH + H(+). Its function is as follows. Catalyzes the reduction of 2,5-diketo-D-gluconic acid (25DKG) to 2-keto-L-gulonic acid (2KLG). 25DKGR-B has higher catalytic efficiency than 25DKGR-A. In Corynebacterium sp. (strain SHS752001), this protein is 2,5-diketo-D-gluconic acid reductase B (dkgB).